The sequence spans 32 residues: Chlorophyll a-b binding protein 2, chloroplastic (32 aa).

E19 and H22 together coordinate chlorophyll a. A chlorophyll b-binding site is contributed by R24.

The protein belongs to the light-harvesting chlorophyll a/b-binding (LHC) protein family. The LHC complex consists of chlorophyll a-b binding proteins. Binds at least 14 chlorophylls (8 Chl-a and 6 Chl-b) and carotenoids such as lutein and neoxanthin. is required as a cofactor. Photoregulated by reversible phosphorylation of its threonine residues.

It localises to the plastid. It is found in the chloroplast thylakoid membrane. The light-harvesting complex (LHC) functions as a light receptor, it captures and delivers excitation energy to photosystems with which it is closely associated. The sequence is that of Chlorophyll a-b binding protein 2, chloroplastic from Populus euphratica (Euphrates poplar).